A 1424-amino-acid polypeptide reads, in one-letter code: Serine/threonine-protein kinase LMTK3 (1424 aa).

The N-terminal stretch at 1–20 (MPAPGALILLAAVSASGCLA) is a signal peptide. Residues 40–60 (AVVLISCSGLLAFIFLLLTCL) form a helical membrane-spanning segment. Residues 74–95 (NPEGEDCSGEYTPPAEETSSSQ) form a disordered region. Residues 133-411 (LSYLQEIGSG…SDLQLQLTYL (279 aa)) enclose the Protein kinase domain. ATP is bound by residues 139 to 147 (IGSGWFGKV) and Lys164. Ser232 bears the Phosphoserine mark. Residue Asp266 is the Proton acceptor of the active site. 2 disordered regions span residues 413–465 (SERP…PDDV) and 486–516 (RGAG…PFYE). A compositionally biased stretch (pro residues) spans 418–439 (RPPPPPPPPRDGPFPWPWPPSH). Arg490 is modified (omega-N-methylarginine). Residues 496–507 (PWQPASAPPAPH) show a composition bias toward pro residues. Ser531 and Ser535 each carry phosphoserine. Disordered regions lie at residues 544 to 666 (EHGS…PLPC), 680 to 964 (LERG…MSPE), 976 to 1024 (MSPK…APET), 1041 to 1313 (GLEM…RKRK), and 1325 to 1424 (LFDQ…PVEN). The span at 571–584 (QTPSEVPQLVSETW) shows a compositional bias: polar residues. Over residues 638-647 (AEEEEEESSP) the composition is skewed to acidic residues. Over residues 700–713 (PPEDDSSLRAERGS) the composition is skewed to basic and acidic residues. Over residues 744 to 758 (RGPPPAPPPPPPPPR) the composition is skewed to pro residues. A compositionally biased stretch (low complexity) spans 759–791 (ASAEPAASPDPPSALASPGSGLSSPGPKPGDSG). The span at 818 to 841 (PRAPPEPPDPGAPRPPPDPGPLPL) shows a compositional bias: pro residues. A compositionally biased stretch (basic and acidic residues) spans 935–954 (DMKEKVAENGLESPEKEERA). Ser947, Ser962, and Ser977 each carry phosphoserine. Over residues 994 to 1004 (RNTERPPEIGP) the composition is skewed to basic and acidic residues. The segment covering 1084-1094 (GSGGRALGGVG) has biased composition (gly residues). A compositionally biased stretch (low complexity) spans 1095–1105 (TAPAGGPASAV). The span at 1167 to 1177 (DPLKPERKGPE) shows a compositional bias: basic and acidic residues. Low complexity predominate over residues 1200–1213 (SRLSLALPPLTLTP). A compositionally biased stretch (gly residues) spans 1231–1241 (AAGGEAGGAGA). Positions 1245–1261 (AEEDGEDEDEDEEDEEA) are enriched in acidic residues. Residues 1262–1272 (AGSRDPGRTRE) show a composition bias toward basic and acidic residues. Positions 1329–1339 (ETPTNELSVQG) are enriched in polar residues. A compositionally biased stretch (pro residues) spans 1348–1360 (STPPAPPTPPHPT).

It belongs to the protein kinase superfamily. Tyr protein kinase family. In terms of assembly, interacts with ESR1. Interacts with AP-2 complex subunit alpha. It depends on Mg(2+) as a cofactor. Post-translationally, autophosphorylated. As to expression, expressed in brain. Predominantly expressed in cerebral cortex, thalamus, the cerebellum and hippocampal formation (at protein level).

The protein resides in the membrane. Its subcellular location is the cell projection. The protein localises to the axon. It is found in the dendrite. It localises to the golgi apparatus membrane. It catalyses the reaction L-seryl-[protein] + ATP = O-phospho-L-seryl-[protein] + ADP + H(+). The catalysed reaction is L-threonyl-[protein] + ATP = O-phospho-L-threonyl-[protein] + ADP + H(+). Its function is as follows. Protein kinase which phosphorylates ESR1 (in vitro) and protects it against proteasomal degradation. May also regulate ESR1 levels indirectly via a PKC-AKT-FOXO3 pathway where it decreases the activity of PKC and the phosphorylation of AKT, thereby increasing binding of transcriptional activator FOXO3 to the ESR1 promoter and increasing ESR1 transcription. Involved in endocytic trafficking of N-methyl-D-aspartate receptors (NMDAR) in neurons. The polypeptide is Serine/threonine-protein kinase LMTK3 (Lmtk3) (Mus musculus (Mouse)).